The following is a 545-amino-acid chain: Prolyl 3-hydroxylase OGFOD1 (545 aa).

Residues 1–23 form a disordered region; that stretch reads MNGKRPADPGPARPMKKGKKQVS. In terms of domain architecture, Fe2OG dioxygenase spans 137–239; sequence PTIDMSCAKY…RLSISGWFYG (103 aa). The Fe cation site is built by histidine 155 and aspartate 157. Tyrosine 169 serves as a coordination point for 2-oxoglutarate. Histidine 218 is a binding site for Fe cation. Arginine 230 lines the 2-oxoglutarate pocket. The span at 371–380 shows a compositional bias: acidic residues; that stretch reads SEDDETEEKG. A disordered region spans residues 371–437; sequence SEDDETEEKG…EAKKESSVPM (67 aa). Residues 383–393 show a composition bias toward low complexity; sequence ETASAAAGTEE. Polar residues predominate over residues 402-417; that stretch reads PENNQVAAGSHSQENG.

Belongs to the TPA1 family. As to quaternary structure, monomer. Fe(2+) serves as cofactor. The cofactor is L-ascorbate.

Its subcellular location is the cytoplasm. It is found in the nucleus. It catalyses the reaction [ribosomal protein uS12]-L-proline + 2-oxoglutarate + O2 = [ribosomal protein uS12]-(3S)-3-hydroxy-L-proline + succinate + CO2. Prolyl 3-hydroxylase that catalyzes 3-hydroxylation of 'Pro-62' of small ribosomal subunit uS12 (RPS23), thereby regulating protein translation termination efficiency. Involved in stress granule formation. This is Prolyl 3-hydroxylase OGFOD1 (Ogfod1) from Mus musculus (Mouse).